A 113-amino-acid chain; its full sequence is TYRO protein tyrosine kinase-binding protein (113 aa).

Positions 1–27 are cleaved as a signal peptide; the sequence is MGGLEPCSRLLLLPLLLAVGGLRPVQA. At 28–40 the chain is on the extracellular side; that stretch reads QAQSDCSCSTVSP. Residues 41–61 traverse the membrane as a helical segment; it reads GVLAGIVMGDLVLTVLIALAV. Ca(2+) is bound at residue Asp50. Topologically, residues 62 to 113 are cytoplasmic; it reads YFLGRLVHRGRGAAEAATRKQRITETESPYQELQGQRSDVYSDLNMQRPYYK. The segment at 75–113 is disordered; sequence AEAATRKQRITETESPYQELQGQRSDVYSDLNMQRPYYK. Residues 80 to 108 enclose the ITAM domain; that stretch reads RKQRITETESPYQELQGQRSDVYSDLNMQ. A compositionally biased stretch (polar residues) spans 87-100; that stretch reads TESPYQELQGQRSD. Phosphotyrosine occurs at positions 91 and 102.

Belongs to the TYROBP family. Homodimer; disulfide-linked. Homotrimer; disulfide-linked. Homotetramer; disulfide-linked. Homotrimers and homotetramers form when low levels of partner receptors are available and is competitive with assembly with interacting receptors. They may represent alternative oligomerization states or may be intermediates in the receptor assembly process. Binding of a metal cation aids in homooligomerization through coordination of the metal ion by the subunits of the oligomer. Interacts with TREM1. Interacts with TREM2. Interacts with CLECSF5. Interacts with CD300LB and CD300C2. Interacts with CD300E. Interacts (via ITAM domain) with SYK (via SH2 domains); activates SYK mediating neutrophils and macrophages integrin-mediated activation. Interacts with KLRC2. Interacts with CD300H. Interacts with KLRD1. Interacts with SIGLEC1. Post-translationally, following ligand binding by associated receptors, tyrosine phosphorylated in the ITAM domain which leads to activation of additional tyrosine kinases and subsequent cell activation.

It localises to the cell membrane. Adapter protein which non-covalently associates with activating receptors found on the surface of a variety of immune cells to mediate signaling and cell activation following ligand binding by the receptors. TYROBP is tyrosine-phosphorylated in the ITAM domain following ligand binding by the associated receptors which leads to activation of additional tyrosine kinases and subsequent cell activation. Also has an inhibitory role in some cells. Non-covalently associates with activating receptors of the CD300 family to mediate cell activation. Also mediates cell activation through association with activating receptors of the CD200R family. Required for neutrophil activation mediated by integrin. Required for the activation of myeloid cells mediated by the CLEC5A/MDL1 receptor. Associates with natural killer (NK) cell receptors such as the KLRD1/KLRC2 heterodimer to mediate NK cell activation. Associates with TREM1 to mediate activation of neutrophils and monocytes. Associates with TREM2 on monocyte-derived dendritic cells to mediate up-regulation of chemokine receptor CCR7 and dendritic cell maturation and survival. Association with TREM2 mediates cytokine-induced formation of multinucleated giant cells which are formed by the fusion of macrophages. Stabilizes the TREM2 C-terminal fragment (TREM2-CTF) produced by TREM2 ectodomain shedding which suppresses the release of pro-inflammatory cytokines. In microglia, required with TREM2 for phagocytosis of apoptotic neurons. Required with ITGAM/CD11B in microglia to control production of microglial superoxide ions which promote the neuronal apoptosis that occurs during brain development. Promotes pro-inflammatory responses in microglia following nerve injury which accelerates degeneration of injured neurons. Positively regulates the expression of the IRAK3/IRAK-M kinase and IL10 production by liver dendritic cells and inhibits their T cell allosimulatory ability. Negatively regulates B cell proliferation. Required for CSF1-mediated osteoclast cytoskeletal organization. Positively regulates multinucleation during osteoclast development. In Pan troglodytes (Chimpanzee), this protein is TYRO protein tyrosine kinase-binding protein.